The sequence spans 78 residues: D-alanyl carrier protein (78 aa).

The Carrier domain occupies 1–78 (MEFKEQVLDL…KIVEALEELR (78 aa)). S36 is modified (O-(pantetheine 4'-phosphoryl)serine).

It belongs to the DltC family. In terms of processing, 4'-phosphopantetheine is transferred from CoA to a specific serine of apo-DCP.

Its subcellular location is the cytoplasm. Its pathway is cell wall biogenesis; lipoteichoic acid biosynthesis. Carrier protein involved in the D-alanylation of lipoteichoic acid (LTA). The loading of thioester-linked D-alanine onto DltC is catalyzed by D-alanine--D-alanyl carrier protein ligase DltA. The DltC-carried D-alanyl group is further transferred to cell membrane phosphatidylglycerol (PG) by forming an ester bond, probably catalyzed by DltD. D-alanylation of LTA plays an important role in modulating the properties of the cell wall in Gram-positive bacteria, influencing the net charge of the cell wall. In Staphylococcus haemolyticus (strain JCSC1435), this protein is D-alanyl carrier protein.